Consider the following 215-residue polypeptide: MKTVLITAFEPFEGEAINPSWEAVKDLHQREVGGVRVVACRLSCVFDLSLDQLYRAIAEWQPEVVIAVGQAGGRADISVERVAININDARIADNRGNQPIDTPVVEKGPAAYFSTLPVKALVQALHVAGIPASVSQTAGTFVCNHVMYGLLHQLHQQGDVVRGGFVHIPYSPEQAARHPGEPSMPTPLVTAALEVMIKQLLVQQVDVAITGGALH.

Catalysis depends on residues E80, C143, and H167.

The protein belongs to the peptidase C15 family. Homotetramer.

It localises to the cytoplasm. The enzyme catalyses Release of an N-terminal pyroglutamyl group from a polypeptide, the second amino acid generally not being Pro.. Removes 5-oxoproline from various penultimate amino acid residues except L-proline. The chain is Pyrrolidone-carboxylate peptidase from Pectobacterium atrosepticum (strain SCRI 1043 / ATCC BAA-672) (Erwinia carotovora subsp. atroseptica).